The following is a 264-amino-acid chain: Thymidylate synthase (264 aa).

Arginine 21 lines the dUMP pocket. Histidine 51 is a binding site for (6R)-5,10-methylene-5,6,7,8-tetrahydrofolate. Residue 126-127 (RR) participates in dUMP binding. The active-site Nucleophile is the cysteine 146. DUMP is bound by residues 166-169 (RSAD), asparagine 177, and 207-209 (HIY). Aspartate 169 provides a ligand contact to (6R)-5,10-methylene-5,6,7,8-tetrahydrofolate. A (6R)-5,10-methylene-5,6,7,8-tetrahydrofolate-binding site is contributed by alanine 263.

It belongs to the thymidylate synthase family. Bacterial-type ThyA subfamily. Homodimer.

It is found in the cytoplasm. The enzyme catalyses dUMP + (6R)-5,10-methylene-5,6,7,8-tetrahydrofolate = 7,8-dihydrofolate + dTMP. It participates in pyrimidine metabolism; dTTP biosynthesis. In terms of biological role, catalyzes the reductive methylation of 2'-deoxyuridine-5'-monophosphate (dUMP) to 2'-deoxythymidine-5'-monophosphate (dTMP) while utilizing 5,10-methylenetetrahydrofolate (mTHF) as the methyl donor and reductant in the reaction, yielding dihydrofolate (DHF) as a by-product. This enzymatic reaction provides an intracellular de novo source of dTMP, an essential precursor for DNA biosynthesis. This is Thymidylate synthase from Bacteroides fragilis (strain ATCC 25285 / DSM 2151 / CCUG 4856 / JCM 11019 / LMG 10263 / NCTC 9343 / Onslow / VPI 2553 / EN-2).